Reading from the N-terminus, the 172-residue chain is NADH-ubiquinone oxidoreductase chain 6 (172 aa).

Transmembrane regions (helical) follow at residues 1 to 21 (MTYF…AVAS), 27 to 47 (YGVV…LSLG), 48 to 68 (VSFV…VVFV), 87 to 107 (VVGY…VGGF), and 138 to 158 (CGVG…FVVL).

It belongs to the complex I subunit 6 family.

It is found in the mitochondrion membrane. The enzyme catalyses a ubiquinone + NADH + 5 H(+)(in) = a ubiquinol + NAD(+) + 4 H(+)(out). Its function is as follows. Core subunit of the mitochondrial membrane respiratory chain NADH dehydrogenase (Complex I) that is believed to belong to the minimal assembly required for catalysis. Complex I functions in the transfer of electrons from NADH to the respiratory chain. The immediate electron acceptor for the enzyme is believed to be ubiquinone. This is NADH-ubiquinone oxidoreductase chain 6 (MT-ND6) from Uria lomvia (Thick-billed murre).